A 404-amino-acid polypeptide reads, in one-letter code: Proteasomal ubiquitin receptor ADRM1-B (404 aa).

The Pru domain maps to 17–130; it reads SSSKYLVEFR…RKVNEYLNNP (114 aa). Disordered stretches follow at residues 128 to 149, 195 to 258, and 376 to 404; these read NNPP…LSAL, GSGG…TSPT, and FAKA…MSLD. Residues 195–247 are compositionally biased toward low complexity; it reads GSGGPTTSSSSSSSRSQSAAVTPSSTTSSTRTTSAPVAPAAAPATTPSPAVSS. A compositionally biased stretch (polar residues) spans 248-258; the sequence is NDGASAATSPT. The 113-residue stretch at 278–390 folds into the DEUBAD domain; the sequence is TGEGGQQVDL…QSTSSQKERE (113 aa). A compositionally biased stretch (basic and acidic residues) spans 386-395; the sequence is QKERESSEKK.

This sequence belongs to the ADRM1 family. As to quaternary structure, component of the 19S proteasome regulatory particle complex. The 26S proteasome consists of a 20S core particle (CP) and two 19S regulatory subunits (RP).

Its subcellular location is the cytoplasm. The protein localises to the nucleus. Its function is as follows. Component of the 26S proteasome, a multiprotein complex involved in the ATP-dependent degradation of ubiquitinated proteins. This complex plays a key role in the maintenance of protein homeostasis by removing misfolded or damaged proteins, which could impair cellular functions, and by removing proteins whose functions are no longer required. Therefore, the proteasome participates in numerous cellular processes, including cell cycle progression, apoptosis, or DNA damage repair. Within the complex, functions as a proteasomal ubiquitin receptor. The polypeptide is Proteasomal ubiquitin receptor ADRM1-B (adrm1-b) (Xenopus laevis (African clawed frog)).